The primary structure comprises 172 residues: Lytic chitin monooxygenase (172 aa).

Positions 1-30 (MHAGRKTAVLIGAALAPVIAVSLPAASASA) are cleaved as a signal peptide. Residues histidine 31 and histidine 106 each coordinate Cu cation. The region spanning 31–168 (HGYISNPPSR…DNAFYACIDV (138 aa)) is the Chitin-binding type-4 domain.

Cu(2+) is required as a cofactor.

The protein localises to the secreted. It carries out the reaction [(1-&gt;4)-N-acetyl-beta-D-glucosaminyl]n+m + reduced acceptor + O2 = [(1-&gt;4)-N-acetyl-beta-D-glucosaminyl]m-1-(1-&gt;4)-2-(acetylamino)-2-deoxy-D-glucono-1,5-lactone + [(1-&gt;4)-N-acetyl-beta-D-glucosaminyl]n + acceptor + H2O.. It participates in glycan degradation; chitin degradation. Involved in chitin degradation. Catalyzes the oxidative cleavage of glycosidic bonds in chitin via a copper-dependent mechanism, leading to oxidized chitooligomers with degrees of polymerization of 4-6. Is not active on cellulose. This chain is Lytic chitin monooxygenase, found in Streptomyces ambofaciens (strain ATCC 23877 / 3486 / DSM 40053 / JCM 4204 / NBRC 12836 / NRRL B-2516).